The sequence spans 535 residues: EH domain-containing protein 3 (535 aa).

Residue Met-1 is modified to N-acetylmethionine. Positions 55–286 (FDNKPMVLLV…DLFRDIQSLP (232 aa)) constitute a Dynamin-type G domain. The G1 motif stretch occupies residues 65–72 (GQYSTGKT). Residue 65–72 (GQYSTGKT) participates in ATP binding. The G2 motif stretch occupies residues 91-92 (EP). Residues 153 to 156 (DTPG) form a G3 motif region. Residues 198 to 227 (DEFSEVIKALKNHEDKMRVVLNKADQIETQ) are a coiled coil. The interval 219-222 (NKAD) is G4 motif. Lys-220 provides a ligand contact to ATP. Residue Ile-243 is a region of interest, G5 motif. Position 258 (Trp-258) interacts with ATP. Lys-315 participates in a covalent cross-link: Glycyl lysine isopeptide (Lys-Gly) (interchain with G-Cter in SUMO). 2 positions are modified to phosphoserine: Ser-349 and Ser-456. Residues 444–532 (DKPMYDEIFY…AHLLPPSKRK (89 aa)) form the EH domain. The EF-hand domain maps to 476 to 511 (LPNSVLGKIWKLADIDKDGMLDDDEFALANHLIKVK). Ca(2+)-binding residues include Asp-489, Asp-491, Asp-493, Met-495, and Glu-500. Residue Lys-511 forms a Glycyl lysine isopeptide (Lys-Gly) (interchain with G-Cter in SUMO) linkage.

Belongs to the TRAFAC class dynamin-like GTPase superfamily. Dynamin/Fzo/YdjA family. EHD subfamily. In terms of assembly, homooligomer, and heterooligomer with EHD1, EHD2 and EHD4, ATP-binding is required for heterooligomerization. Interacts with PACSIN1. Interacts with PACSIN2. Interacts (via EH domain) with MICALL1. Interacts (via EH domain) with RAB11FIP2. Interacts with ANK2. Highly expressed in heart and brain and moderately expressed in kidney, liver, and placenta.

It is found in the recycling endosome membrane. The protein resides in the cell membrane. Its subcellular location is the cell projection. The protein localises to the cilium membrane. Its function is as follows. ATP- and membrane-binding protein that controls membrane reorganization/tubulation upon ATP hydrolysis. In vitro causes tubulation of endocytic membranes. Binding to phosphatidic acid induces its membrane tubulation activity. Plays a role in endocytic transport. Involved in early endosome to recycling endosome compartment (ERC), retrograde early endosome to Golgi, and endosome to plasma membrane (rapid recycling) protein transport. Involved in the regulation of Golgi maintenance and morphology. Involved in the recycling of internalized D1 dopamine receptor. Plays a role in cardiac protein trafficking probably implicating ANK2. Involved in the ventricular membrane targeting of SLC8A1 and CACNA1C and probably the atrial membrane localization of CACNA1GG and CACNA1H implicated in the regulation of atrial myocyte excitability and cardiac conduction. In conjunction with EHD4 may be involved in endocytic trafficking of KDR/VEGFR2 implicated in control of glomerular function. Involved in the rapid recycling of integrin beta-3 implicated in cell adhesion maintenance. Involved in the unidirectional retrograde dendritic transport of endocytosed BACE1 and in efficient sorting of BACE1 to axons implicating a function in neuronal APP processing. Plays a role in the formation of the ciliary vesicle, an early step in cilium biogenesis; possibly sharing redundant functions with EHD1. In Homo sapiens (Human), this protein is EH domain-containing protein 3.